Reading from the N-terminus, the 159-residue chain is Ribonuclease P protein component 2 (159 aa).

It belongs to the eukaryotic/archaeal RNase P protein component 2 family. As to quaternary structure, consists of a catalytic RNA component and at least 4-5 protein subunits.

The protein localises to the cytoplasm. It carries out the reaction Endonucleolytic cleavage of RNA, removing 5'-extranucleotides from tRNA precursor.. Its function is as follows. Part of ribonuclease P, a protein complex that generates mature tRNA molecules by cleaving their 5'-ends. The chain is Ribonuclease P protein component 2 from Halorubrum lacusprofundi (strain ATCC 49239 / DSM 5036 / JCM 8891 / ACAM 34).